The following is a 318-amino-acid chain: Methionyl-tRNA formyltransferase (318 aa).

A (6S)-5,6,7,8-tetrahydrofolate-binding site is contributed by 115 to 118; sequence SLLP.

Belongs to the Fmt family.

The catalysed reaction is L-methionyl-tRNA(fMet) + (6R)-10-formyltetrahydrofolate = N-formyl-L-methionyl-tRNA(fMet) + (6S)-5,6,7,8-tetrahydrofolate + H(+). Its function is as follows. Attaches a formyl group to the free amino group of methionyl-tRNA(fMet). The formyl group appears to play a dual role in the initiator identity of N-formylmethionyl-tRNA by promoting its recognition by IF2 and preventing the misappropriation of this tRNA by the elongation apparatus. In Deinococcus radiodurans (strain ATCC 13939 / DSM 20539 / JCM 16871 / CCUG 27074 / LMG 4051 / NBRC 15346 / NCIMB 9279 / VKM B-1422 / R1), this protein is Methionyl-tRNA formyltransferase.